Here is a 448-residue protein sequence, read N- to C-terminus: Tryptophan dimethylallyltransferase 1 (448 aa).

L-tryptophan-binding positions include 80-81 and Glu89; that span reads IL. The substrate site is built by Arg100, Lys186, and Tyr188. The L-tryptophan site is built by Tyr190 and Arg251. Positions 264, 266, 268, 350, 352, 416, and 420 each coordinate substrate.

The protein belongs to the tryptophan dimethylallyltransferase family. As to quaternary structure, homodimer.

It carries out the reaction L-tryptophan + dimethylallyl diphosphate = 4-(3-methylbut-2-enyl)-L-tryptophan + diphosphate. Its pathway is alkaloid biosynthesis; ergot alkaloid biosynthesis. In terms of biological role, catalyzes the first step of ergot alkaloid biosynthesis. Ergot alkaloids, which are produced by endophyte fungi, can enhance plant host fitness, but also cause livestock toxicosis to host plants. This Epichloe coenophiala (Tall fescue endophyte fungus) protein is Tryptophan dimethylallyltransferase 1 (dmaW1).